The sequence spans 96 residues: ESAT-6-like protein EsxH (96 aa).

The Zn(2+) site is built by His-14, His-70, His-76, and Glu-77.

It belongs to the WXG100 family. ESAT-6 subfamily. As to quaternary structure, forms a tight 1:1 complex with EsxG. When it is complexed to EsxG, interacts directly with host HGS/HRS.

It is found in the secreted. In terms of biological role, esxH, in complex with EsxG, disrupts ESCRT function and impairs host phagosome maturation, thereby promoting intracellular bacterial growth. The complex acts by interacting, via EsxH, with the host hepatocyte growth factor-regulated tyrosine kinase substrate (HGS/HRS), a component of the ESCRT machinery. The polypeptide is ESAT-6-like protein EsxH (Mycobacterium tuberculosis (strain ATCC 25618 / H37Rv)).